The chain runs to 486 residues: V-type proton ATPase subunit B1 (486 aa).

An N-acetylglycine modification is found at G2.

This sequence belongs to the ATPase alpha/beta chains family. V-ATPase is a heteromultimeric enzyme composed of a peripheral catalytic V1 complex (components A to H) attached to an integral membrane V0 proton pore complex (components: a, c, c'', d and e).

It is found in the vacuole membrane. In terms of biological role, non-catalytic subunit of the peripheral V1 complex of vacuolar ATPase. V-ATPase is responsible for acidifying a variety of intracellular compartments in eukaryotic cells. The polypeptide is V-type proton ATPase subunit B1 (VHA-B1) (Arabidopsis thaliana (Mouse-ear cress)).